Here is a 421-residue protein sequence, read N- to C-terminus: UDP-N-acetylglucosamine 1-carboxyvinyltransferase (421 aa).

A phosphoenolpyruvate-binding site is contributed by 23 to 24; it reads KN. Arg92 contributes to the UDP-N-acetyl-alpha-D-glucosamine binding site. The active-site Proton donor is Cys116. Position 116 is a 2-(S-cysteinyl)pyruvic acid O-phosphothioketal (Cys116). Residues 121–125, 161–164, Asp306, and Ile328 each bind UDP-N-acetyl-alpha-D-glucosamine; these read RPVDL and KVSV.

This sequence belongs to the EPSP synthase family. MurA subfamily.

It is found in the cytoplasm. The catalysed reaction is phosphoenolpyruvate + UDP-N-acetyl-alpha-D-glucosamine = UDP-N-acetyl-3-O-(1-carboxyvinyl)-alpha-D-glucosamine + phosphate. Its pathway is cell wall biogenesis; peptidoglycan biosynthesis. Functionally, cell wall formation. Adds enolpyruvyl to UDP-N-acetylglucosamine. This chain is UDP-N-acetylglucosamine 1-carboxyvinyltransferase, found in Vibrio vulnificus (strain CMCP6).